Consider the following 140-residue polypeptide: Phosphoribosyl-AMP cyclohydrolase (140 aa).

Asp-85 serves as a coordination point for Mg(2+). Zn(2+) is bound at residue Cys-86. The Mg(2+) site is built by Asp-87 and Asp-89. Zn(2+)-binding residues include Cys-102 and Cys-109.

This sequence belongs to the PRA-CH family. As to quaternary structure, homodimer. Mg(2+) is required as a cofactor. The cofactor is Zn(2+).

It localises to the cytoplasm. The catalysed reaction is 1-(5-phospho-beta-D-ribosyl)-5'-AMP + H2O = 1-(5-phospho-beta-D-ribosyl)-5-[(5-phospho-beta-D-ribosylamino)methylideneamino]imidazole-4-carboxamide. The protein operates within amino-acid biosynthesis; L-histidine biosynthesis; L-histidine from 5-phospho-alpha-D-ribose 1-diphosphate: step 3/9. In terms of biological role, catalyzes the hydrolysis of the adenine ring of phosphoribosyl-AMP. The polypeptide is Phosphoribosyl-AMP cyclohydrolase (Bradyrhizobium diazoefficiens (strain JCM 10833 / BCRC 13528 / IAM 13628 / NBRC 14792 / USDA 110)).